A 646-amino-acid chain; its full sequence is Threonine--tRNA ligase (646 aa).

A TGS domain is found at 1–61 (MIKITFPDGN…NEDSNFEIVT (61 aa)). Positions 242-540 (DHRKLGRELD…LIEVYKGAFP (299 aa)) are catalytic. Zn(2+)-binding residues include Cys-336, His-387, and His-517.

Belongs to the class-II aminoacyl-tRNA synthetase family. Homodimer. It depends on Zn(2+) as a cofactor.

The protein localises to the cytoplasm. The catalysed reaction is tRNA(Thr) + L-threonine + ATP = L-threonyl-tRNA(Thr) + AMP + diphosphate + H(+). Functionally, catalyzes the attachment of threonine to tRNA(Thr) in a two-step reaction: L-threonine is first activated by ATP to form Thr-AMP and then transferred to the acceptor end of tRNA(Thr). Also edits incorrectly charged L-seryl-tRNA(Thr). The chain is Threonine--tRNA ligase from Lactococcus lactis subsp. lactis (strain IL1403) (Streptococcus lactis).